The sequence spans 96 residues: MTVDDKLIAKLEKLSSLQVDDERKEKLKSELADIINFVENLNDIDVSNIEATFSTIEGGTPLREDTSKQDLELSNHILNHAPKSEDGYFIVPKIIE.

This sequence belongs to the GatC family. As to quaternary structure, heterotrimer of A, B and C subunits.

The catalysed reaction is L-glutamyl-tRNA(Gln) + L-glutamine + ATP + H2O = L-glutaminyl-tRNA(Gln) + L-glutamate + ADP + phosphate + H(+). It carries out the reaction L-aspartyl-tRNA(Asn) + L-glutamine + ATP + H2O = L-asparaginyl-tRNA(Asn) + L-glutamate + ADP + phosphate + 2 H(+). In terms of biological role, allows the formation of correctly charged Asn-tRNA(Asn) or Gln-tRNA(Gln) through the transamidation of misacylated Asp-tRNA(Asn) or Glu-tRNA(Gln) in organisms which lack either or both of asparaginyl-tRNA or glutaminyl-tRNA synthetases. The reaction takes place in the presence of glutamine and ATP through an activated phospho-Asp-tRNA(Asn) or phospho-Glu-tRNA(Gln). This chain is Aspartyl/glutamyl-tRNA(Asn/Gln) amidotransferase subunit C, found in Aliarcobacter butzleri (strain RM4018) (Arcobacter butzleri).